We begin with the raw amino-acid sequence, 644 residues long: 1-deoxy-D-xylulose-5-phosphate synthase (644 aa).

Thiamine diphosphate-binding positions include H78 and 120–122; that span reads GHA. Mg(2+) is bound at residue D149. Thiamine diphosphate-binding positions include 150–151, N178, and E373; that span reads AA. N178 is a Mg(2+) binding site.

Belongs to the transketolase family. DXPS subfamily. As to quaternary structure, homodimer. Mg(2+) is required as a cofactor. The cofactor is thiamine diphosphate.

The enzyme catalyses D-glyceraldehyde 3-phosphate + pyruvate + H(+) = 1-deoxy-D-xylulose 5-phosphate + CO2. It functions in the pathway metabolic intermediate biosynthesis; 1-deoxy-D-xylulose 5-phosphate biosynthesis; 1-deoxy-D-xylulose 5-phosphate from D-glyceraldehyde 3-phosphate and pyruvate: step 1/1. Catalyzes the acyloin condensation reaction between C atoms 2 and 3 of pyruvate and glyceraldehyde 3-phosphate to yield 1-deoxy-D-xylulose-5-phosphate (DXP). The protein is 1-deoxy-D-xylulose-5-phosphate synthase of Chlamydia abortus (strain DSM 27085 / S26/3) (Chlamydophila abortus).